Here is a 435-residue protein sequence, read N- to C-terminus: Nuclear receptor subfamily 6 group A member 1 (435 aa).

Residues 11-86 (QRACLICGDR…MGMNRKAIRE (76 aa)) constitute a DNA-binding region (nuclear receptor). 2 NR C4-type zinc fingers span residues 14 to 34 (CLIC…CEGC) and 50 to 69 (CSRD…CQYC). Positions 84 to 158 (IREDGMPGGR…STPSSSRSME (75 aa)) are disordered. Residues 121-141 (NTSWSNNGDSDHSSPGNAVSE) are compositionally biased toward polar residues. Over residues 142-156 (SNQPSPVSTPSSSRS) the composition is skewed to low complexity. Residues 204-435 (QSHTLINQLL…HSCKTIVTKE (232 aa)) form the NR LBD domain.

It belongs to the nuclear hormone receptor family. NR6 subfamily. As to quaternary structure, homodimer. Transiently expressed in differentiating cells of all embryonic germ layers. Expressed in an anterior to posterior concentration gradient from late gastrula to midneurula stages. Shows a complicated spatio-temporal pattern of expression during neurulation, being predominant in the neural plate and neural crest in midneurula embryos. At late tailbud (stage 30), mainly expressed in the head mesenchyme, gill arches and tail tip. Expression persists in the epidermis, somites and endoderm, and in the central nervous system, expression is restricted to the midbrain, hindbrain and part of the spinal cord. Isoforms Oo and Em are both expressed in the brain and isoform Oo is expressed in the germ cells of both the adult testis and ovary.

The protein resides in the cytoplasm. It is found in the nucleus. Probable orphan nuclear receptor. Binds to a response element containing repeats of the motif 5'-AGGTCA-3'. Required for anterior-posterior patterning during organogenesis. Acts with chordin to play a role in patterning the midbrain-hindbrain. Isoform Em is required for integrin-mediated cell matrix interaction during neurulation and for the morphogenetic movements leading to formation of the neural tube. Also mediates the effect of retinoic acid on primary neurogenesis. The sequence is that of Nuclear receptor subfamily 6 group A member 1 from Xenopus laevis (African clawed frog).